An 862-amino-acid polypeptide reads, in one-letter code: Protein SEY1 (862 aa).

Residues 1–743 (MASNGHFSSV…KRSAIGGITQ (743 aa)) are Cytoplasmic-facing. Residues 48–301 (GFNYHLISVF…IPADGFAVYA (254 aa)) form the GB1/RHD3-type G domain. 58–65 (GSQSTGKS) is a GTP binding site. Residues 476-500 (SDYKQELSLFQKDLEKISSQLRKDE) adopt a coiled-coil conformation. Residues 744–764 (VPLYFYGLLLALGWNEIIAVL) traverse the membrane as a helical segment. Over 765-767 (RNP) the chain is Lumenal. Residues 768 to 788 (IYFIFLLLIGVGAYVTFRLNL) form a helical membrane-spanning segment. Residues 789-862 (WGPMINMAEA…TSDDDNDDDL (74 aa)) are Cytoplasmic-facing. The disordered stretch occupies residues 818-862 (SDSGRQAMAMSGRNARGTEEYEMSSNLKSKGRRTDTSDDDNDDDL).

Belongs to the TRAFAC class dynamin-like GTPase superfamily. GB1/RHD3 GTPase family. RHD3 subfamily.

It localises to the endoplasmic reticulum membrane. Cooperates with the reticulon proteins and tubule-shaping DP1 family proteins to generate and maintain the structure of the tubular endoplasmic reticulum network. Has GTPase activity, which is required for its function in ER organization. The polypeptide is Protein SEY1 (Arthroderma otae (strain ATCC MYA-4605 / CBS 113480) (Microsporum canis)).